The following is a 249-amino-acid chain: Sugar fermentation stimulation protein homolog (249 aa).

The protein belongs to the SfsA family.

The polypeptide is Sugar fermentation stimulation protein homolog (Synechococcus sp. (strain CC9902)).